An 843-amino-acid polypeptide reads, in one-letter code: MTASSGGYQGWERRNNNIPETVGILFLQVRAVSSGKKAAQCRETAPTAGLSESSRPRLFAMDYSKGSKKRKAITKDVDEDPSVVSGDEYDLEALDRNDSDSSADASDSEIELIGDFSSDDGEDDDGEDDDELDSDEVPSDTEPFARVKSGNIATGLDGSLDGESNDLSDDNEPNYRIEKDANGNDRYIYPEINPDDNSEYSEVDEEANTIGDIPLSFYDQYPHIGYNINGKKILRPAKGQALDALLDSIEIPKGWTGLTDPSTGKPLQLSQEELELLRKVQMNEITQDGYDPYQPTIEYFTSKQEIMPLSAAPEPKRRFIPSKHEAKRVMKIVKAIREGRILPYKPPEEEDATQEGIQTYDLWADESPRPDHPMNIPAPKLPPPGYEESYHPPPEYLPDKKEKEEWENQDEEDREREYLPTDYSTLRKVPGYERFVKEKFERCLDLYLAPRVRRSKLNIDPESLLPKLPSPEELKPFPTTCATLFRGHRGRVRSLAIDPTGVWLASGGDDGTVRVWELLTGRQLWSVKLSDEDAVNVVRWRPGKEAVVLAASVGDSIYLAVPDVVNLELEAASLEVIDAGWGYATSTGTSTTKKTSPVQWTRPASSLADSGVYAVIPLGYIAKSISWHRRGDYFVTVCPGTSTPASVAIAIHTLSKHLTQYPFRRRLKGGGSPQVAHFHPSKPILFVANQRSIRAYDLSRQTLVKILRPGARWISSFDIHPTSSSTSGGDNLIVGSYDRRLLWHDVDLSDRPYKTLRYHQKAIRAVKYHPHYPLFADTSDDGSLQIFHGSVTGDLLSNANIVPLKVLKGHKVTGDLGVLDLDWHPREAWCVSAGADGTCRLWM.

Disordered regions lie at residues 36–189 and 364–419; these read KKAA…RYIY and ADES…REYL. 3 stretches are compositionally biased toward acidic residues: residues 77 to 92, 106 to 139, and 163 to 172; these read VDED…YDLE, SDSE…EVPS, and ESNDLSDDNE. The span at 173–183 shows a compositional bias: basic and acidic residues; it reads PNYRIEKDANG. Residues 379-396 are compositionally biased toward pro residues; it reads PKLPPPGYEESYHPPPEY. Residues 397 to 406 show a composition bias toward basic and acidic residues; that stretch reads LPDKKEKEEW. WD repeat units follow at residues 487–526, 530–570, 668–706, 709–754, 758–797, and 813–843; these read GHRG…QLWS, SDED…LELE, KGGG…LVKI, PGAR…RPYK, YHQK…DLLS, and TGDL…RLWM.

This sequence belongs to the WD repeat BOP1/ERB1 family. As to quaternary structure, component of the NOP7 complex, composed of ERB1, NOP7 and YTM1. The complex is held together by ERB1, which interacts with NOP7 via its N-terminal domain and with YTM1 via a high-affinity interaction between the seven-bladed beta-propeller domains of the 2 proteins. The NOP7 complex associates with the 66S pre-ribosome.

It is found in the nucleus. The protein resides in the nucleolus. It localises to the nucleoplasm. Functionally, component of the NOP7 complex, which is required for maturation of the 25S and 5.8S ribosomal RNAs and formation of the 60S ribosome. The protein is Ribosome biogenesis protein ERB1 of Coccidioides immitis (strain RS) (Valley fever fungus).